A 340-amino-acid chain; its full sequence is Glycerol-3-phosphate dehydrogenase [NAD(P)+] (340 aa).

Positions 11, 12, 33, and 106 each coordinate NADPH. Residues Lys-106, Gly-137, and Ser-139 each contribute to the sn-glycerol 3-phosphate site. An NADPH-binding site is contributed by Ala-141. Residues Lys-192, Asp-245, Ser-255, Arg-256, and Asn-257 each contribute to the sn-glycerol 3-phosphate site. The active-site Proton acceptor is the Lys-192. Arg-256 provides a ligand contact to NADPH. Positions 280 and 282 each coordinate NADPH.

The protein belongs to the NAD-dependent glycerol-3-phosphate dehydrogenase family.

The protein localises to the cytoplasm. It carries out the reaction sn-glycerol 3-phosphate + NAD(+) = dihydroxyacetone phosphate + NADH + H(+). The catalysed reaction is sn-glycerol 3-phosphate + NADP(+) = dihydroxyacetone phosphate + NADPH + H(+). The protein operates within membrane lipid metabolism; glycerophospholipid metabolism. Its function is as follows. Catalyzes the reduction of the glycolytic intermediate dihydroxyacetone phosphate (DHAP) to sn-glycerol 3-phosphate (G3P), the key precursor for phospholipid synthesis. The sequence is that of Glycerol-3-phosphate dehydrogenase [NAD(P)+] from Bacillus cereus (strain B4264).